Reading from the N-terminus, the 532-residue chain is 2,3-bisphosphoglycerate-independent phosphoglycerate mutase (532 aa).

Mn(2+)-binding residues include Asp-15 and Ser-65. The active-site Phosphoserine intermediate is the Ser-65. Residues His-126, 156 to 157, Arg-188, Arg-194, 258 to 261, and Lys-331 contribute to the substrate site; these read RD and RPDR. Mn(2+)-binding residues include Asp-398, His-402, Asp-439, His-440, and His-457.

This sequence belongs to the BPG-independent phosphoglycerate mutase family. In terms of assembly, monomer. Mn(2+) is required as a cofactor.

The enzyme catalyses (2R)-2-phosphoglycerate = (2R)-3-phosphoglycerate. The protein operates within carbohydrate degradation; glycolysis; pyruvate from D-glyceraldehyde 3-phosphate: step 3/5. Functionally, catalyzes the interconversion of 2-phosphoglycerate and 3-phosphoglycerate. The polypeptide is 2,3-bisphosphoglycerate-independent phosphoglycerate mutase (Nostoc punctiforme (strain ATCC 29133 / PCC 73102)).